Here is a 409-residue protein sequence, read N- to C-terminus: Type II methyltransferase M.BsuFI (409 aa).

Residues 101–402 enclose the SAM-dependent MTase C5-type domain; the sequence is LTFIDLFAGI…GAMKERLLLA (302 aa). Residue cysteine 170 is part of the active site.

This sequence belongs to the class I-like SAM-binding methyltransferase superfamily. C5-methyltransferase family.

It carries out the reaction a 2'-deoxycytidine in DNA + S-adenosyl-L-methionine = a 5-methyl-2'-deoxycytidine in DNA + S-adenosyl-L-homocysteine + H(+). In terms of biological role, a methylase, recognizes the double-stranded sequence 5'-CCGG-3', methylates C-1 on both strands, and protects the DNA from cleavage by the BsuFI endonuclease. This is Type II methyltransferase M.BsuFI (hsdFM) from Bacillus subtilis.